Here is a 294-residue protein sequence, read N- to C-terminus: Cytidine deaminase (294 aa).

2 CMP/dCMP-type deaminase domains span residues 48–168 (DEDA…FGPK) and 186–294 (LTGD…VLLG). Position 89–91 (89–91 (NME)) interacts with substrate. Zn(2+) is bound at residue His-102. Glu-104 acts as the Proton donor in catalysis. Cys-129 and Cys-132 together coordinate Zn(2+).

This sequence belongs to the cytidine and deoxycytidylate deaminase family. In terms of assembly, homodimer. Zn(2+) is required as a cofactor.

It carries out the reaction cytidine + H2O + H(+) = uridine + NH4(+). It catalyses the reaction 2'-deoxycytidine + H2O + H(+) = 2'-deoxyuridine + NH4(+). This enzyme scavenges exogenous and endogenous cytidine and 2'-deoxycytidine for UMP synthesis. The chain is Cytidine deaminase from Salmonella schwarzengrund (strain CVM19633).